The chain runs to 149 residues: Transcriptional repressor NrdR (149 aa).

The segment at 3-34 (CPFCGFEESKVVDSRSTDDNTTIRRRRECLKC) is a zinc-finger region. The 91-residue stretch at 49–139 (ILVIKKDLTR…VYRQFKDIDT (91 aa)) folds into the ATP-cone domain.

It belongs to the NrdR family. It depends on Zn(2+) as a cofactor.

Functionally, negatively regulates transcription of bacterial ribonucleotide reductase nrd genes and operons by binding to NrdR-boxes. In Clostridium beijerinckii (strain ATCC 51743 / NCIMB 8052) (Clostridium acetobutylicum), this protein is Transcriptional repressor NrdR.